We begin with the raw amino-acid sequence, 216 residues long: Sperm microtubule inner protein 8 (216 aa).

In terms of assembly, microtubule inner protein component of sperm flagellar doublet microtubules. As to expression, expressed in sperm.

It is found in the cytoplasm. The protein resides in the cytoskeleton. It localises to the flagellum axoneme. Functionally, microtubule inner protein (MIP) part of the dynein-decorated doublet microtubules (DMTs) in flagellum axoneme. May serve to reinforce and thus stabilize the microtubule structure in the sperm flagella. The sequence is that of Sperm microtubule inner protein 8 (SPMIP8) from Bos taurus (Bovine).